The primary structure comprises 222 residues: MLRLVQSNTGFRSLSCRLLSSTKLVTPRFWYSQDNSKAEEIFKRKLIAREKEFRSRLPQWEKRDISLKKRYGVWNPTKKVSRVQMQDIRSLKLQMPNLKTVDMANMFGVSPESIRRILNSKWQPSENDMKKLEKRAERRKAESRERKEQSEQDLKDGVRRIHRAKTIKLQNVRYKETDAINEKDTSKKTASKRQSHAVTGKQGKMKTTIDKPFVPSVADLIK.

The N-terminal 26 residues, 1-26, are a transit peptide targeting the mitochondrion; the sequence is MLRLVQSNTGFRSLSCRLLSSTKLVT. Disordered regions lie at residues 120 to 158 and 177 to 207; these read SKWQ…KDGV and TDAI…KMKT. Composition is skewed to basic and acidic residues over residues 127–158 and 177–187; these read NDMK…KDGV and TDAINEKDTSK.

It belongs to the RRG9 family.

Its subcellular location is the mitochondrion. Required for respiratory activity and maintenance and expression of the mitochondrial genome. This is Required for respiratory growth protein 9, mitochondrial (RRG9) from Scheffersomyces stipitis (strain ATCC 58785 / CBS 6054 / NBRC 10063 / NRRL Y-11545) (Yeast).